Consider the following 288-residue polypeptide: MKFEFRTLVLISLAVVVVLSGCSQSPSSGGVPEYSGSKVYSAPTLYSQLIGVPTEGVSVKAYTVENANAKDILSWYKEKLSDYEIVNEMSVVQMTTPQGSAEWGAILFKKGDKGVGIWAMSGSGVEGGGAVYFIVEGPIDKLTGESGEAGGAGEQLPASDQASGEEPVKRYPGSVMLSYYKDTSNPLEVSIGIDYGTEDSAEKVAHWYKQELQAEGWVLESESSDDSSIDLAFSRGKEYIDIYIIEPYEGFLTRKLTSTTGRRGCHLTTWSVERSRWRGIPAQLCWNT.

The N-terminal stretch at 1-27 (MKFEFRTLVLISLAVVVVLSGCSQSPS) is a signal peptide. Positions 144–167 (GESGEAGGAGEQLPASDQASGEEP) are disordered.

This is an uncharacterized protein from Archaeoglobus fulgidus (strain ATCC 49558 / DSM 4304 / JCM 9628 / NBRC 100126 / VC-16).